A 313-amino-acid chain; its full sequence is Phenylalanine-4-hydroxylase (313 aa).

Positions 154, 159, and 200 each coordinate Fe cation.

This sequence belongs to the biopterin-dependent aromatic amino acid hydroxylase family. Fe(2+) is required as a cofactor.

The catalysed reaction is (6R)-L-erythro-5,6,7,8-tetrahydrobiopterin + L-phenylalanine + O2 = (4aS,6R)-4a-hydroxy-L-erythro-5,6,7,8-tetrahydrobiopterin + L-tyrosine. Its pathway is amino-acid degradation; L-phenylalanine degradation; acetoacetate and fumarate from L-phenylalanine: step 1/6. The protein is Phenylalanine-4-hydroxylase (phhA) of Ralstonia nicotianae (strain ATCC BAA-1114 / GMI1000) (Ralstonia solanacearum).